The chain runs to 282 residues: Putative phosphatase in upp 3'region (282 aa).

Asp17 (nucleophile) is an active-site residue. Asp17 is a Mg(2+) binding site. A phosphate-binding site is contributed by Leu18. Asp19 serves as a coordination point for Mg(2+). Phosphate-binding positions include 53–54 and Lys211; that span reads TG. The Mg(2+) site is built by Asp234 and Ser235. Asn237 provides a ligand contact to phosphate.

The protein belongs to the HAD-like hydrolase superfamily. Cof family. Mg(2+) serves as cofactor.

This chain is Putative phosphatase in upp 3'region, found in Metamycoplasma hominis (Mycoplasma hominis).